The following is a 77-amino-acid chain: Large ribosomal subunit protein eL20 (77 aa).

It belongs to the eukaryotic ribosomal protein eL20 family. In terms of assembly, part of the 50S ribosomal subunit. Binds 23S rRNA.

The sequence is that of Large ribosomal subunit protein eL20 from Pyrococcus furiosus (strain ATCC 43587 / DSM 3638 / JCM 8422 / Vc1).